Consider the following 193-residue polypeptide: Large ribosomal subunit protein uL5 (193 aa).

This sequence belongs to the universal ribosomal protein uL5 family. Part of the 50S ribosomal subunit; part of the 5S rRNA/L5/L18/L25 subcomplex. Contacts the 5S rRNA and the P site tRNA. Forms a bridge to the 30S subunit in the 70S ribosome.

In terms of biological role, this is one of the proteins that bind and probably mediate the attachment of the 5S RNA into the large ribosomal subunit, where it forms part of the central protuberance. In the 70S ribosome it contacts protein S13 of the 30S subunit (bridge B1b), connecting the 2 subunits; this bridge is implicated in subunit movement. Contacts the P site tRNA; the 5S rRNA and some of its associated proteins might help stabilize positioning of ribosome-bound tRNAs. This is Large ribosomal subunit protein uL5 from Arthrobacter sp. (strain FB24).